The chain runs to 187 residues: Probable chorismate pyruvate-lyase (187 aa).

R76, L114, and E173 together coordinate substrate.

This sequence belongs to the UbiC family.

The protein localises to the cytoplasm. It catalyses the reaction chorismate = 4-hydroxybenzoate + pyruvate. It participates in cofactor biosynthesis; ubiquinone biosynthesis. Removes the pyruvyl group from chorismate, with concomitant aromatization of the ring, to provide 4-hydroxybenzoate (4HB) for the ubiquinone pathway. This is Probable chorismate pyruvate-lyase from Shewanella amazonensis (strain ATCC BAA-1098 / SB2B).